Consider the following 268-residue polypeptide: Small ribosomal subunit protein eS1 (268 aa).

Residues 1-21 (MAVGKNKGLSKGGKKGGKKKV) form a disordered region.

It belongs to the eukaryotic ribosomal protein eS1 family. As to quaternary structure, component of the small ribosomal subunit. Mature ribosomes consist of a small (40S) and a large (60S) subunit. The 40S subunit contains about 33 different proteins and 1 molecule of RNA (18S). The 60S subunit contains about 49 different proteins and 3 molecules of RNA (28S, 5.8S and 5S).

It localises to the cytoplasm. Essential for oogenesis; required for late follicle cell development. This Drosophila virilis (Fruit fly) protein is Small ribosomal subunit protein eS1.